Consider the following 157-residue polypeptide: Transcriptional repressor NrdR (157 aa).

Residues 3–34 (CPKCNSTHSRVVDSRHADEANAIRRRRECENC) fold into a zinc finger. The region spanning 49–139 (LIVVKKDGTR…VYKEFKDVDQ (91 aa)) is the ATP-cone domain.

This sequence belongs to the NrdR family. It depends on Zn(2+) as a cofactor.

In terms of biological role, negatively regulates transcription of bacterial ribonucleotide reductase nrd genes and operons by binding to NrdR-boxes. This chain is Transcriptional repressor NrdR, found in Staphylococcus carnosus (strain TM300).